The following is a 91-amino-acid chain: Small ribosomal subunit protein uS15 (91 aa).

Belongs to the universal ribosomal protein uS15 family. In terms of assembly, part of the 30S ribosomal subunit. Forms a bridge to the 50S subunit in the 70S ribosome, contacting the 23S rRNA.

Functionally, one of the primary rRNA binding proteins, it binds directly to 16S rRNA where it helps nucleate assembly of the platform of the 30S subunit by binding and bridging several RNA helices of the 16S rRNA. In terms of biological role, forms an intersubunit bridge (bridge B4) with the 23S rRNA of the 50S subunit in the ribosome. The chain is Small ribosomal subunit protein uS15 from Cytophaga hutchinsonii (strain ATCC 33406 / DSM 1761 / CIP 103989 / NBRC 15051 / NCIMB 9469 / D465).